The chain runs to 434 residues: 5'-deoxyadenosine deaminase (434 aa).

Histidine 63 and histidine 65 together coordinate Zn(2+). Substrate is bound by residues glutamate 92 and histidine 184. Position 211 (histidine 211) interacts with Zn(2+). 2 residues coordinate substrate: glutamate 214 and aspartate 299. Residue aspartate 299 participates in Zn(2+) binding.

This sequence belongs to the metallo-dependent hydrolases superfamily. MTA/SAH deaminase family. Homotetramer. The cofactor is Zn(2+).

It carries out the reaction 5'-deoxyadenosine + H2O + H(+) = 5'-deoxyinosine + NH4(+). It catalyses the reaction S-adenosyl-L-homocysteine + H2O + H(+) = S-inosyl-L-homocysteine + NH4(+). The catalysed reaction is S-methyl-5'-thioadenosine + H2O + H(+) = S-methyl-5'-thioinosine + NH4(+). The enzyme catalyses adenosine + H2O + H(+) = inosine + NH4(+). It functions in the pathway amino-acid biosynthesis; S-adenosyl-L-methionine biosynthesis. Catalyzes the deamination of three SAM-derived enzymatic products, namely 5'-deoxyadenosine, S-adenosyl-L-homocysteine, and 5'-methylthioadenosine, to produce the inosine analogs. Can also deaminate adenosine. The preferred substrate for this enzyme is 5'-deoxyadenosine, but all these substrates are efficiently deaminated. Likely functions in a S-adenosyl-L-methionine (SAM) recycling pathway from S-adenosyl-L-homocysteine (SAH) produced from SAM-dependent methylation reactions. May also be involved in the recycling of 5'-deoxyadenosine, whereupon the 5'-deoxyribose moiety of 5'-deoxyinosine is further metabolized to deoxyhexoses used for the biosynthesis of aromatic amino acids in methanogens. In Methanococcoides burtonii (strain DSM 6242 / NBRC 107633 / OCM 468 / ACE-M), this protein is 5'-deoxyadenosine deaminase.